A 137-amino-acid polypeptide reads, in one-letter code: Small ribosomal subunit protein uS12 (137 aa).

Aspartate 89 carries the post-translational modification 3-methylthioaspartic acid. The tract at residues 105–137 (AGVAGRTQRRSKYGAKRPKAGQAAAPAKGKGKK) is disordered. Positions 111 to 123 (TQRRSKYGAKRPK) are enriched in basic residues. Over residues 124–137 (AGQAAAPAKGKGKK) the composition is skewed to low complexity.

It belongs to the universal ribosomal protein uS12 family. Part of the 30S ribosomal subunit. Contacts proteins S8 and S17. May interact with IF1 in the 30S initiation complex.

With S4 and S5 plays an important role in translational accuracy. In terms of biological role, interacts with and stabilizes bases of the 16S rRNA that are involved in tRNA selection in the A site and with the mRNA backbone. Located at the interface of the 30S and 50S subunits, it traverses the body of the 30S subunit contacting proteins on the other side and probably holding the rRNA structure together. The combined cluster of proteins S8, S12 and S17 appears to hold together the shoulder and platform of the 30S subunit. The sequence is that of Small ribosomal subunit protein uS12 from Phocaeicola vulgatus (strain ATCC 8482 / DSM 1447 / JCM 5826 / CCUG 4940 / NBRC 14291 / NCTC 11154) (Bacteroides vulgatus).